The primary structure comprises 177 residues: Parathyroid hormone-related protein (177 aa).

The N-terminal stretch at 1–24 is a signal peptide; it reads MLRRLVQQWGVAVFLLSYSVPSCG. Positions 25 to 34 are excised as a propeptide; the sequence is RSVEELGRRL. The segment at 57 to 68 is important for receptor binding; the sequence is RFFLHHLIAEIH. The disordered stretch occupies residues 74-177; the sequence is ATSEVSPNSK…TSLELNLRRH (104 aa). Residues 76-90 show a composition bias toward polar residues; sequence SEVSPNSKPAPNTKN. The Nuclear localization signal motif lies at 108–129; the sequence is TNKVETYKEQPLKTPGKKKKGK. A compositionally biased stretch (basic and acidic residues) spans 109 to 118; sequence NKVETYKEQP. Basic residues predominate over residues 122–132; it reads PGKKKKGKPGK.

The protein belongs to the parathyroid hormone family. In terms of assembly, PTHrP interacts with PTH1R (via N-terminal extracellular domain). Post-translationally, there are several secretory forms, including osteostatin, arising from endoproteolytic cleavage of the initial translation product. Each of these secretory forms is believed to have one or more of its own receptors that mediates the normal paracrine, autocrine and endocrine actions.

The protein localises to the secreted. It is found in the cytoplasm. The protein resides in the nucleus. Neuroendocrine peptide which is a critical regulator of cellular and organ growth, development, migration, differentiation and survival and of epithelial calcium ion transport. Acts by binding to its receptor, PTH1R, activating G protein-coupled receptor signaling. Regulates endochondral bone development and epithelial-mesenchymal interactions during the formation of the mammary glands and teeth. Required for skeletal homeostasis. Promotes mammary mesenchyme differentiation and bud outgrowth by modulating mesenchymal cell responsiveness to BMPs. Up-regulates BMPR1A expression in the mammary mesenchyme and this increases the sensitivity of these cells to BMPs and allows them to respond to BMP4 in a paracrine and/or autocrine fashion. BMP4 signaling in the mesenchyme, in turn, triggers epithelial outgrowth and augments MSX2 expression, which causes the mammary mesenchyme to inhibit hair follicle formation within the nipple sheath. In terms of biological role, potent inhibitor of osteoclastic bone resorption. In Canis lupus familiaris (Dog), this protein is Parathyroid hormone-related protein (PTHLH).